A 1690-amino-acid chain; its full sequence is DNA-directed RNA polymerase subunit beta' (1690 aa).

Cys63, Cys65, Cys78, and Cys81 together coordinate Zn(2+). Mg(2+) contacts are provided by Asp753, Asp755, and Asp757. Zn(2+)-binding residues include Cys1107, Cys1295, Cys1302, and Cys1305.

This sequence belongs to the RNA polymerase beta' chain family. The RNAP catalytic core consists of 2 alpha, 1 beta, 1 beta' and 1 omega subunit. When a sigma factor is associated with the core the holoenzyme is formed, which can initiate transcription. The cofactor is Mg(2+). Requires Zn(2+) as cofactor.

The catalysed reaction is RNA(n) + a ribonucleoside 5'-triphosphate = RNA(n+1) + diphosphate. Its function is as follows. DNA-dependent RNA polymerase catalyzes the transcription of DNA into RNA using the four ribonucleoside triphosphates as substrates. This chain is DNA-directed RNA polymerase subunit beta', found in Thermotoga petrophila (strain ATCC BAA-488 / DSM 13995 / JCM 10881 / RKU-1).